Here is a 543-residue protein sequence, read N- to C-terminus: CTP synthase (543 aa).

Residues 1–270 (MNNLTSTKFI…DTQILKHFNI (270 aa)) form an amidoligase domain region. Serine 18 is a CTP binding site. Serine 18 serves as a coordination point for UTP. ATP contacts are provided by residues 19–24 (SLGKGL) and aspartate 76. Positions 76 and 144 each coordinate Mg(2+). CTP contacts are provided by residues 151-153 (DIE), 191-196 (KTKPTQ), and lysine 227. Residues 191 to 196 (KTKPTQ) and lysine 227 contribute to the UTP site. Residues 295 to 537 (TIAIIGKYIK…IQASLNYQET (243 aa)) enclose the Glutamine amidotransferase type-1 domain. Glycine 356 is a binding site for L-glutamine. Cysteine 383 acts as the Nucleophile; for glutamine hydrolysis in catalysis. L-glutamine contacts are provided by residues 384–387 (MGMQ), glutamate 407, and arginine 462. Residues histidine 510 and glutamate 512 contribute to the active site.

This sequence belongs to the CTP synthase family. In terms of assembly, homotetramer.

It carries out the reaction UTP + L-glutamine + ATP + H2O = CTP + L-glutamate + ADP + phosphate + 2 H(+). The enzyme catalyses L-glutamine + H2O = L-glutamate + NH4(+). The catalysed reaction is UTP + NH4(+) + ATP = CTP + ADP + phosphate + 2 H(+). The protein operates within pyrimidine metabolism; CTP biosynthesis via de novo pathway; CTP from UDP: step 2/2. Its activity is regulated as follows. Allosterically activated by GTP, when glutamine is the substrate; GTP has no effect on the reaction when ammonia is the substrate. The allosteric effector GTP functions by stabilizing the protein conformation that binds the tetrahedral intermediate(s) formed during glutamine hydrolysis. Inhibited by the product CTP, via allosteric rather than competitive inhibition. In terms of biological role, catalyzes the ATP-dependent amination of UTP to CTP with either L-glutamine or ammonia as the source of nitrogen. Regulates intracellular CTP levels through interactions with the four ribonucleotide triphosphates. In Ehrlichia ruminantium (strain Gardel), this protein is CTP synthase.